Here is a 2287-residue protein sequence, read N- to C-terminus: Protein Ycf2 (2287 aa).

Position 1632 to 1639 (1632 to 1639 (GSIGTGRS)) interacts with ATP.

This sequence belongs to the Ycf2 family.

The protein localises to the plastid. It localises to the chloroplast stroma. Functionally, probable ATPase of unknown function. Its presence in a non-photosynthetic plant (Epifagus virginiana) and experiments in tobacco indicate that it has an essential function which is probably not related to photosynthesis. The chain is Protein Ycf2 from Calycanthus floridus var. glaucus (Eastern sweetshrub).